Consider the following 164-residue polypeptide: 6,7-dimethyl-8-ribityllumazine synthase (164 aa).

5-amino-6-(D-ribitylamino)uracil is bound by residues tyrosine 30, 61-63 (ALE), and 85-87 (CVI). 90–91 (ET) is a (2S)-2-hydroxy-3-oxobutyl phosphate binding site. The active-site Proton donor is histidine 93. Residue asparagine 118 participates in 5-amino-6-(D-ribitylamino)uracil binding. A (2S)-2-hydroxy-3-oxobutyl phosphate-binding site is contributed by arginine 132.

The protein belongs to the DMRL synthase family.

It carries out the reaction (2S)-2-hydroxy-3-oxobutyl phosphate + 5-amino-6-(D-ribitylamino)uracil = 6,7-dimethyl-8-(1-D-ribityl)lumazine + phosphate + 2 H2O + H(+). It participates in cofactor biosynthesis; riboflavin biosynthesis; riboflavin from 2-hydroxy-3-oxobutyl phosphate and 5-amino-6-(D-ribitylamino)uracil: step 1/2. Functionally, catalyzes the formation of 6,7-dimethyl-8-ribityllumazine by condensation of 5-amino-6-(D-ribitylamino)uracil with 3,4-dihydroxy-2-butanone 4-phosphate. This is the penultimate step in the biosynthesis of riboflavin. The chain is 6,7-dimethyl-8-ribityllumazine synthase from Methylobacterium radiotolerans (strain ATCC 27329 / DSM 1819 / JCM 2831 / NBRC 15690 / NCIMB 10815 / 0-1).